Here is a 35-residue protein sequence, read N- to C-terminus: CRVENKCPHTVCCDRSRCSCKLIRTRPLMYHVCVC.

Residue Pro8 is modified to 4-hydroxyproline.

Contains 4 disulfide bonds. Expressed by the venom duct.

The protein resides in the secreted. The polypeptide is Conotoxin Ca15a (Conus caracteristicus (Characteristic cone)).